Here is a 245-residue protein sequence, read N- to C-terminus: Orotidine 5'-phosphate decarboxylase (245 aa).

Substrate-binding positions include D22, K44, 71-80 (DLKFHDIPNT), T131, R192, Q201, G221, and R222. Residue K73 is the Proton donor of the active site.

Belongs to the OMP decarboxylase family. Type 1 subfamily. Homodimer.

The catalysed reaction is orotidine 5'-phosphate + H(+) = UMP + CO2. Its pathway is pyrimidine metabolism; UMP biosynthesis via de novo pathway; UMP from orotate: step 2/2. In terms of biological role, catalyzes the decarboxylation of orotidine 5'-monophosphate (OMP) to uridine 5'-monophosphate (UMP). The chain is Orotidine 5'-phosphate decarboxylase from Escherichia fergusonii (strain ATCC 35469 / DSM 13698 / CCUG 18766 / IAM 14443 / JCM 21226 / LMG 7866 / NBRC 102419 / NCTC 12128 / CDC 0568-73).